We begin with the raw amino-acid sequence, 417 residues long: Gamma-glutamyl phosphate reductase (417 aa).

The protein belongs to the gamma-glutamyl phosphate reductase family.

The protein localises to the cytoplasm. The enzyme catalyses L-glutamate 5-semialdehyde + phosphate + NADP(+) = L-glutamyl 5-phosphate + NADPH + H(+). It participates in amino-acid biosynthesis; L-proline biosynthesis; L-glutamate 5-semialdehyde from L-glutamate: step 2/2. Functionally, catalyzes the NADPH-dependent reduction of L-glutamate 5-phosphate into L-glutamate 5-semialdehyde and phosphate. The product spontaneously undergoes cyclization to form 1-pyrroline-5-carboxylate. The protein is Gamma-glutamyl phosphate reductase of Haemophilus influenzae (strain PittGG).